We begin with the raw amino-acid sequence, 527 residues long: 4-alpha-glucanotransferase (527 aa).

This sequence belongs to the disproportionating enzyme family.

It localises to the cytoplasm. The enzyme catalyses Transfers a segment of a (1-&gt;4)-alpha-D-glucan to a new position in an acceptor, which may be glucose or a (1-&gt;4)-alpha-D-glucan.. The polypeptide is 4-alpha-glucanotransferase (malQ) (Chlamydia trachomatis serovar D (strain ATCC VR-885 / DSM 19411 / UW-3/Cx)).